The primary structure comprises 456 residues: Ribulose bisphosphate carboxylase large chain (456 aa).

Lys7 is subject to N6,N6,N6-trimethyllysine. Substrate is bound by residues Asn116 and Thr166. The active-site Proton acceptor is the Lys168. Residue Lys170 coordinates substrate. The Mg(2+) site is built by Lys194, Asp196, and Glu197. Lys194 is subject to N6-carboxylysine. The active-site Proton acceptor is His287. Substrate is bound by residues Arg288, His320, and Ser372.

The protein belongs to the RuBisCO large chain family. Type I subfamily. Heterohexadecamer of 8 large chains and 8 small chains; disulfide-linked. The disulfide link is formed within the large subunit homodimers. Requires Mg(2+) as cofactor. In terms of processing, the disulfide bond which can form in the large chain dimeric partners within the hexadecamer appears to be associated with oxidative stress and protein turnover.

Its subcellular location is the plastid. The protein resides in the chloroplast. It carries out the reaction 2 (2R)-3-phosphoglycerate + 2 H(+) = D-ribulose 1,5-bisphosphate + CO2 + H2O. The catalysed reaction is D-ribulose 1,5-bisphosphate + O2 = 2-phosphoglycolate + (2R)-3-phosphoglycerate + 2 H(+). In terms of biological role, ruBisCO catalyzes two reactions: the carboxylation of D-ribulose 1,5-bisphosphate, the primary event in carbon dioxide fixation, as well as the oxidative fragmentation of the pentose substrate in the photorespiration process. Both reactions occur simultaneously and in competition at the same active site. The protein is Ribulose bisphosphate carboxylase large chain of Barnardia japonica (Chinese squill).